The primary structure comprises 501 residues: Envelope glycoprotein C homolog (501 aa).

A signal peptide spans 1–27; sequence MLTPRVLRALGWTGLFFLLLSPSNVLG. The Virion surface portion of the chain corresponds to 28-465; sequence ASLSRDLETP…DATPSARGTP (438 aa). Asparagine 46 carries N-linked (GlcNAc...) asparagine; by host glycosylation. Residues 53–86 are disordered; that stretch reads PLTEVPHAPSTESVSTNSESTNEHTITETTGKNA. Residues 62 to 72 show a composition bias toward low complexity; sequence STESVSTNSES. N-linked (GlcNAc...) asparagine; by host glycosylation is found at asparagine 91, asparagine 100, asparagine 120, asparagine 212, asparagine 354, asparagine 400, and asparagine 429. In terms of domain architecture, Ig-like spans 258 to 356; sequence PASVDVLAPP…GDMISTTNAT (99 aa). A helical transmembrane segment spans residues 466–492; that stretch reads MVITVTAVLGLAVILGMGIIMTALCLY. At 493–501 the chain is on the cytoplasmic side; the sequence is NSTRKNIRL.

It belongs to the herpesviridae glycoprotein C family.

Its subcellular location is the secreted. It is found in the host cell membrane. In terms of biological role, may play an immunoevasive role in the pathogenesis of Marek's disease. It is a candidate for causing the early-stage immunosuppression that occurs after MDHV infection. In Gallus gallus (Chicken), this protein is Envelope glycoprotein C homolog (gC).